Here is a 124-residue protein sequence, read N- to C-terminus: Pal-related lipoprotein (124 aa).

The N-terminal stretch at M1–G18 is a signal peptide. C19 carries the N-palmitoyl cysteine lipid modification. C19 carries S-diacylglycerol cysteine lipidation.

The protein localises to the cell membrane. The sequence is that of Pal-related lipoprotein (slp) from Bacillus subtilis (strain 168).